The following is a 267-amino-acid chain: Hydroxynaphthalene reductase-like protein Arp2 (267 aa).

Residues I25, N45, D71, and N98 each contribute to the NADP(+) site. Active-site proton donor residues include S147 and S148. NADP(+) is bound by residues Y162, K166, V195, and T197. The active-site Proton acceptor is Y162. Residue K166 is the Lowers pKa of active site Tyr of the active site.

It belongs to the short-chain dehydrogenases/reductases (SDR) family.

In terms of biological role, hydroxynaphthalene reductase-like protein; part of the Pks2 gene cluster that mediates the formation of infectious structures (appressoria), enabling these fungi to kill insects faster. The product of the Pks2 gene cluster is different from the one of Pks1 and has still not been identified. The sequence is that of Hydroxynaphthalene reductase-like protein Arp2 from Metarhizium guizhouense (strain ARSEF 977).